The primary structure comprises 327 residues: Malate dehydrogenase (327 aa).

11–17 (GAAGQIS) serves as a coordination point for NAD(+). Substrate-binding residues include Arg92 and Arg98. NAD(+) is bound by residues Asn105, Gln112, and 129–131 (VGN). 2 residues coordinate substrate: Asn131 and Arg162. Catalysis depends on His187, which acts as the Proton acceptor.

This sequence belongs to the LDH/MDH superfamily. MDH type 2 family.

The catalysed reaction is (S)-malate + NAD(+) = oxaloacetate + NADH + H(+). Functionally, catalyzes the reversible oxidation of malate to oxaloacetate. This Cellvibrio japonicus (strain Ueda107) (Pseudomonas fluorescens subsp. cellulosa) protein is Malate dehydrogenase.